The sequence spans 78 residues: Defensin-like protein (78 aa).

The first 31 residues, 1–31 (MGRSIRLFATFFLIAMLFLSTEMGPMTSAEA), serve as a signal peptide directing secretion. 4 disulfides stabilise this stretch: cysteine 34–cysteine 78, cysteine 45–cysteine 65, cysteine 51–cysteine 72, and cysteine 55–cysteine 74.

It belongs to the DEFL family. As to expression, predominantly expressed in the pistil during all stages of flower development.

Its subcellular location is the secreted. Functionally, may be involved in the defense of the pistil against pathogen infection. The sequence is that of Defensin-like protein from Petunia integrifolia (Violet-flowered petunia).